Here is a 745-residue protein sequence, read N- to C-terminus: GTPase-activating protein GYP7 (745 aa).

A Rab-GAP TBC domain is found at 391–623 (LADDATRKEV…NIWEVFFTDF (233 aa)).

Functionally, most effectively accelerate the intrinsic GTPase activity of YPT7. It is also active, but to a lesser extent, on YPT31, YPT32 and YPT1. YPT6 and SEC4. The chain is GTPase-activating protein GYP7 (GYP7) from Candida glabrata (strain ATCC 2001 / BCRC 20586 / JCM 3761 / NBRC 0622 / NRRL Y-65 / CBS 138) (Yeast).